The primary structure comprises 534 residues: Glycerophosphodiester transporter GIT2 (534 aa).

12 helical membrane-spanning segments follow: residues 63-83, 96-116, 135-155, 163-183, 202-222, 230-250, 289-309, 322-342, 350-370, 377-397, 417-437, and 453-473; these read GAGLFADGYVNNSIGIVMACL, AISNIGSIGFVGTVVGQLSFG, LIAFTLLCAVGSWGTTIQGFF, FCLGVAIGAEYPTSSVIASEF, FMIDFGFVVSAFVPFVLLWIF, LWRVSIGLGAILPTALFFIRL, MIWFIYNFSVYSFGTFNAIIL, WGWSVVFNLFYIPGSFLGAFS, LTLAIGVGLQGIIGFIMSACL, VAAFTVVFGIFATLGEFGPGG, GIAAAMGKIGAFVGTWIFPAI, and VPFYLSSGLCIFSALLTFFLC.

The protein belongs to the major facilitator superfamily. Sugar transporter (TC 2.A.1.1) family.

The protein localises to the cell membrane. Probable glycerophosphodiester transporter. Does not possess detectable glycerophosphoinositol (GroPIns) transport activity. Might be involved in the uptake of glycerophosphocholine (GroPCho). The expanded ability to utilize GroPIns and GroPCho results from the organism's pathogenic nature and its need to occupy a variety of environments within its host organism. This possibility is buttressed by the fact that GroPIns and GroPCho are present and abundant in human fluids. This Candida albicans (strain SC5314 / ATCC MYA-2876) (Yeast) protein is Glycerophosphodiester transporter GIT2.